The sequence spans 245 residues: Uridylate kinase (245 aa).

An ATP-binding site is contributed by 15 to 18 (KLSG). Residues 23 to 28 (GEEGFG) are involved in allosteric activation by GTP. Residue Gly57 coordinates UMP. ATP contacts are provided by Gly58 and Arg62. Residues Asp77 and 138–145 (TGNPFCTT) contribute to the UMP site. Thr165, Tyr171, and Asp174 together coordinate ATP.

This sequence belongs to the UMP kinase family. As to quaternary structure, homohexamer.

The protein localises to the cytoplasm. The catalysed reaction is UMP + ATP = UDP + ADP. The protein operates within pyrimidine metabolism; CTP biosynthesis via de novo pathway; UDP from UMP (UMPK route): step 1/1. Its activity is regulated as follows. Allosterically activated by GTP. Inhibited by UTP. Catalyzes the reversible phosphorylation of UMP to UDP. The polypeptide is Uridylate kinase (Shewanella putrefaciens (strain CN-32 / ATCC BAA-453)).